Here is a 151-residue protein sequence, read N- to C-terminus: Large ribosomal subunit protein bL9 (151 aa).

This sequence belongs to the bacterial ribosomal protein bL9 family.

Binds to the 23S rRNA. The protein is Large ribosomal subunit protein bL9 of Mycolicibacterium gilvum (strain PYR-GCK) (Mycobacterium gilvum (strain PYR-GCK)).